The following is a 282-amino-acid chain: E3 ubiquitin-protein ligase SIAH1 (282 aa).

Polar residues predominate over residues 1-17 (MSRQTATALPTGTSKCP). The interval 1-22 (MSRQTATALPTGTSKCPPSQRV) is disordered. Residue Ser-19 is modified to Phosphoserine; by ATM and ATR. Residues 41–76 (CPVCFDYVLPPILQCQSGHLVCSNCRPKLTCCPTCR) form an RING-type zinc finger. The segment at 90–282 (VANSVLFPCK…LGINVTISMC (193 aa)) is SBD. The SIAH-type zinc-finger motif lies at 93-153 (SVLFPCKYAS…VMPHLMHQHK (61 aa)). Cys-98, Cys-105, His-117, Cys-121, Cys-128, Cys-135, His-147, and His-152 together coordinate Zn(2+).

This sequence belongs to the SINA (Seven in absentia) family. As to quaternary structure, homodimer. Interacts with group 1 glutamate receptors GRM1 and GRM5. Interacts with DAB1, which may inhibit its activity. Interacts with UBE2E2. Interacts with PEG3. Interacts with GAPDH; leading to stabilize SIAH1. Component of some large E3 complex composed of UBE2D1, SIAH1, CACYBP/SIP, SKP1, APC and TBL1X. Interacts with UBE2I. Interacts with alpha-tubulin. Interacts with PEG10, which may inhibit its activity. Interacts with KHDRBS3. Interacts with SNCAIP. Interacts with HIPK2; the interaction is promoted by DAZAP2 and results in SIAH1-mediated ubiquitination and subsequent proteasomal degradation of HIPK2. Interacts with DAZAP2; the interaction is decreased following phosphorylation of DAZAP2 by HIPK2. Interacts with Bassoon/BSN and Piccolo/PLCO; these interactions negatively regulate SIAH1 E3 ligase activity. Interacts with DCC. Interacts with AXIN1; catalyzes AXIN1 ubiquitination and subsequent proteasome-mediated ubiquitin-dependent degradation. Phosphorylated on Ser-19 by ATM and ATR. This phosphorylation disrupts SIAH1 interaction with HIPK2, and subsequent proteasomal degradation of HIPK2. As to expression, widely expressed at a low level. Down-regulated in advanced hepatocellular carcinomas.

Its subcellular location is the cytoplasm. It is found in the nucleus. It carries out the reaction S-ubiquitinyl-[E2 ubiquitin-conjugating enzyme]-L-cysteine + [acceptor protein]-L-lysine = [E2 ubiquitin-conjugating enzyme]-L-cysteine + N(6)-ubiquitinyl-[acceptor protein]-L-lysine.. Its pathway is protein modification; protein ubiquitination. Its activity is regulated as follows. Inhibited by interaction with SNCAIP (isoform 2, but not isoform 1). May be inhibited by interaction with PEG10. E3 ubiquitin-protein ligase that mediates ubiquitination and subsequent proteasomal degradation of target proteins. E3 ubiquitin ligases accept ubiquitin from an E2 ubiquitin-conjugating enzyme in the form of a thioester and then directly transfers the ubiquitin to targeted substrates. Mediates E3 ubiquitin ligase activity either through direct binding to substrates or by functioning as the essential RING domain subunit of larger E3 complexes. Triggers the ubiquitin-mediated degradation of many substrates, including proteins involved in transcription regulation (ELL2, MYB, POU2AF1, PML and RBBP8), a cell surface receptor (DCC), the cell-surface receptor-type tyrosine kinase FLT3, the cytoplasmic signal transduction molecules (KLF10/TIEG1 and NUMB), an antiapoptotic protein (BAG1), a microtubule motor protein (KIF22), a protein involved in synaptic vesicle function in neurons (SYP), a structural protein (CTNNB1) and SNCAIP. Confers constitutive instability to HIPK2 through proteasomal degradation. It is thereby involved in many cellular processes such as apoptosis, tumor suppression, cell cycle, axon guidance, transcription regulation, spermatogenesis and TNF-alpha signaling. Has some overlapping function with SIAH2. Induces apoptosis in cooperation with PEG3. Upon nitric oxid (NO) generation that follows apoptotic stimulation, interacts with S-nitrosylated GAPDH, mediating the translocation of GAPDH to the nucleus. GAPDH acts as a stabilizer of SIAH1, facilitating the degradation of nuclear proteins. Mediates ubiquitination and degradation of EGLN2 and EGLN3 in response to the unfolded protein response (UPR), leading to their degradation and subsequent stabilization of ATF4. Also part of the Wnt signaling pathway in which it mediates the Wnt-induced ubiquitin-mediated proteasomal degradation of AXIN1. This Homo sapiens (Human) protein is E3 ubiquitin-protein ligase SIAH1 (SIAH1).